The sequence spans 300 residues: Protoheme IX farnesyltransferase (300 aa).

The next 9 helical transmembrane spans lie at 20-40 (ITKMRLAISVVFSSVAGYFLG), 43-63 (TIDFVTVTLLAIGGYLMVGAS), 94-114 (PVAFTIASAFTVLGLVVLYVI), 116-136 (PKTAMFGAISIFLYVSIYTPL), 142-162 (LSVFVGAFPGAIPFMLGWVAA), 173-193 (LFMIQFFWQFPHFWAIGWWLF), 215-235 (IQIILYTCWTILVSLIPVFGV), 241-261 (LTPVSGIIIFLLGLGMLYYAI), and 276-296 (MFASVSYITLLQIVYVLDKFI).

It belongs to the UbiA prenyltransferase family. Protoheme IX farnesyltransferase subfamily.

The protein localises to the cell membrane. The catalysed reaction is heme b + (2E,6E)-farnesyl diphosphate + H2O = Fe(II)-heme o + diphosphate. The protein operates within porphyrin-containing compound metabolism; heme O biosynthesis; heme O from protoheme: step 1/1. Its function is as follows. Converts heme B (protoheme IX) to heme O by substitution of the vinyl group on carbon 2 of heme B porphyrin ring with a hydroxyethyl farnesyl side group. The chain is Protoheme IX farnesyltransferase from Christiangramia forsetii (strain DSM 17595 / CGMCC 1.15422 / KT0803) (Gramella forsetii).